Consider the following 243-residue polypeptide: Tyrosine recombinase XerD-like (243 aa).

One can recognise a Core-binding (CB) domain in the interval 1 to 72 (MKQAIESFIQ…AVNQFLYFLY (72 aa)). One can recognise a Tyr recombinase domain in the interval 91 to 243 (SVKKKLERED…KTSMSLEKFR (153 aa)). Active-site residues include lysine 149 and arginine 210.

Belongs to the 'phage' integrase family. XerD-like subfamily.

It is found in the cytoplasm. Functionally, putative tyrosine recombinase. Not involved in the cutting and rejoining of the recombining DNA molecules on dif(SL) site. The protein is Tyrosine recombinase XerD-like of Streptococcus suis (strain 98HAH33).